The primary structure comprises 160 residues: Putative antiporter subunit mnhE2 (160 aa).

Transmembrane regions (helical) follow at residues 22 to 42, 55 to 75, and 100 to 120; these read HFKF…IYIL, IWVA…SSIS, and SDWA…STVI.

This sequence belongs to the CPA3 antiporters (TC 2.A.63) subunit E family. In terms of assembly, may form a heterooligomeric complex that consists of seven subunits: mnhA2, mnhB2, mnhC2, mnhD2, mnhE2, mnhF2 and mnhG2.

It is found in the cell membrane. The chain is Putative antiporter subunit mnhE2 (mnhE2) from Staphylococcus aureus (strain Mu3 / ATCC 700698).